The following is a 213-amino-acid chain: Uridine kinase (213 aa).

ATP is bound at residue 14–21 (GASASGKS).

This sequence belongs to the uridine kinase family.

It localises to the cytoplasm. It carries out the reaction uridine + ATP = UMP + ADP + H(+). The catalysed reaction is cytidine + ATP = CMP + ADP + H(+). It functions in the pathway pyrimidine metabolism; CTP biosynthesis via salvage pathway; CTP from cytidine: step 1/3. Its pathway is pyrimidine metabolism; UMP biosynthesis via salvage pathway; UMP from uridine: step 1/1. In Vibrio atlanticus (strain LGP32) (Vibrio splendidus (strain Mel32)), this protein is Uridine kinase.